The sequence spans 327 residues: Serine/threonine-protein phosphatase PP1-beta catalytic subunit (327 aa).

Alanine 2 carries the post-translational modification N-acetylalanine. 4 residues coordinate Mn(2+): aspartate 63, histidine 65, aspartate 91, and asparagine 123. Histidine 124 functions as the Proton donor in the catalytic mechanism. Mn(2+)-binding residues include histidine 172 and histidine 247. Residues 305–327 (QYGGLNSGRPVTPPRTANPPKKR) form a disordered region. Threonine 316 is modified (phosphothreonine).

The protein belongs to the PPP phosphatase family. PP-1 subfamily. PP1 comprises a catalytic subunit, PPP1CA, PPP1CB or PPP1CC, which is folded into its native form by inhibitor 2 and glycogen synthetase kinase 3, and then complexed to one or several targeting or regulatory subunits. The targeting or regulatory subunits determine the substrate specificity of PP1. PPP1R12A, PPP1R12B and PPP1R12C mediate binding to myosin. PPP1R3A (in skeletal muscle), PPP1R3B (in liver), PPP1R3C, PPP1R3D and PPP1R3F (in brain) mediate binding to glycogen. PPP1R15A and PPP1R15B mediate binding to EIF2S1. Part of a complex containing PPP1R15B, PP1 and NCK1/2. Interacts with PPP1R7 and PPP1R12C. Interacts with PPP1R16B. Component of the PTW/PP1 phosphatase complex, composed of PPP1R10/PNUTS, TOX4, WDR82, and PPP1CA or PPP1CB or PPP1CC. Interacts with PPP1R8. Interacts with PPP1R12A and NUAK1; the interaction is direct. Interacts with TRIM28; the interaction is weak. Interacts with FOXP3. Interacts with RRP1B. Interacts with SERPINE1. Interacts with LZTR1. Component of the SHOC2-MRAS-PP1c (SMP) complex consisting of SHOC2, GTP-bound M-Ras/MRAS and the catalytic subunit of protein phosphatase 1 (either PPP1CA, PPP1CB or PPP1CC). SHOC2 and PP1c preferably bind M-Ras/MRAS, but they also bind K-Ras/KRAS, N-Ras/NRAS and H-Ras/HRAS; these interactions are GTP-dependent and both SHOC2 and PP1c are required to form a stable complex. Interacts with SHOC2 in the absence of Ras GTPases. Requires Mn(2+) as cofactor.

The protein resides in the cytoplasm. Its subcellular location is the nucleus. It localises to the nucleoplasm. It is found in the nucleolus. The catalysed reaction is O-phospho-L-seryl-[protein] + H2O = L-seryl-[protein] + phosphate. It catalyses the reaction O-phospho-L-threonyl-[protein] + H2O = L-threonyl-[protein] + phosphate. The enzyme catalyses O-phospho-L-seryl-[myosin light chain] + H2O = L-seryl-[myosin light chain] + phosphate. It carries out the reaction O-phospho-L-threonyl-[myosin light chain] + H2O = L-threonyl-[myosin light chain] + phosphate. With respect to regulation, inhibited by the toxins okadaic acid, tautomycin and microcystin Leu-Arg. The phosphatase activity of the PPP1R15A-PP1 complex toward EIF2S1 is specifically inhibited by Salubrinal, a drug that protects cells from endoplasmic reticulum stress. In terms of biological role, protein phosphatase that associates with over 200 regulatory proteins to form highly specific holoenzymes which dephosphorylate hundreds of biological targets. Protein phosphatase (PP1) is essential for cell division, it participates in the regulation of glycogen metabolism, muscle contractility and protein synthesis. Involved in regulation of ionic conductances and long-term synaptic plasticity. Component of the PTW/PP1 phosphatase complex, which plays a role in the control of chromatin structure and cell cycle progression during the transition from mitosis into interphase. In balance with CSNK1D and CSNK1E, determines the circadian period length, through the regulation of the speed and rhythmicity of PER1 and PER2 phosphorylation. May dephosphorylate CSNK1D and CSNK1E. Core component of the SHOC2-MRAS-PP1c (SMP) holophosphatase complex that regulates the MAPK pathway activation. The SMP complex specifically dephosphorylates the inhibitory phosphorylation at 'Ser-259' of RAF1 kinase, 'Ser-365' of BRAF kinase and 'Ser-214' of ARAF kinase, stimulating their kinase activities. The SMP complex enhances the dephosphorylation activity and substrate specificity of PP1c. The sequence is that of Serine/threonine-protein phosphatase PP1-beta catalytic subunit (PPP1CB) from Bos taurus (Bovine).